Reading from the N-terminus, the 424-residue chain is Serine--tRNA ligase (424 aa).

233–235 (TAE) contributes to the L-serine binding site. 264–266 (RRE) contacts ATP. Glutamate 287 provides a ligand contact to L-serine. An ATP-binding site is contributed by 351 to 354 (EISS). Serine 386 is a binding site for L-serine.

It belongs to the class-II aminoacyl-tRNA synthetase family. Type-1 seryl-tRNA synthetase subfamily. Homodimer. The tRNA molecule binds across the dimer.

Its subcellular location is the cytoplasm. It carries out the reaction tRNA(Ser) + L-serine + ATP = L-seryl-tRNA(Ser) + AMP + diphosphate + H(+). It catalyses the reaction tRNA(Sec) + L-serine + ATP = L-seryl-tRNA(Sec) + AMP + diphosphate + H(+). The protein operates within aminoacyl-tRNA biosynthesis; selenocysteinyl-tRNA(Sec) biosynthesis; L-seryl-tRNA(Sec) from L-serine and tRNA(Sec): step 1/1. In terms of biological role, catalyzes the attachment of serine to tRNA(Ser). Is also able to aminoacylate tRNA(Sec) with serine, to form the misacylated tRNA L-seryl-tRNA(Sec), which will be further converted into selenocysteinyl-tRNA(Sec). This chain is Serine--tRNA ligase, found in Petrotoga mobilis (strain DSM 10674 / SJ95).